Here is a 546-residue protein sequence, read N- to C-terminus: CTP synthase (546 aa).

Positions 1-266 (MTTRYIFVTG…DDLVVKRFGL (266 aa)) are amidoligase domain. Serine 14 contributes to the CTP binding site. Serine 14 provides a ligand contact to UTP. Residues 15-20 (SLGKGI) and aspartate 72 contribute to the ATP site. Mg(2+)-binding residues include aspartate 72 and glutamate 140. CTP contacts are provided by residues 147–149 (DIE), 187–192 (KTKPTQ), and lysine 223. Residues 187–192 (KTKPTQ) and lysine 223 contribute to the UTP site. 239–241 (KDV) provides a ligand contact to ATP. Positions 291–542 (VIGMVGKYIE…VAAASAHQKR (252 aa)) constitute a Glutamine amidotransferase type-1 domain. Glycine 352 contributes to the L-glutamine binding site. The active-site Nucleophile; for glutamine hydrolysis is the cysteine 379. L-glutamine contacts are provided by residues 380-383 (LGMQ), glutamate 403, and arginine 470. Catalysis depends on residues histidine 515 and glutamate 517.

It belongs to the CTP synthase family. Homotetramer.

The catalysed reaction is UTP + L-glutamine + ATP + H2O = CTP + L-glutamate + ADP + phosphate + 2 H(+). It carries out the reaction L-glutamine + H2O = L-glutamate + NH4(+). The enzyme catalyses UTP + NH4(+) + ATP = CTP + ADP + phosphate + 2 H(+). The protein operates within pyrimidine metabolism; CTP biosynthesis via de novo pathway; CTP from UDP: step 2/2. Its activity is regulated as follows. Allosterically activated by GTP, when glutamine is the substrate; GTP has no effect on the reaction when ammonia is the substrate. The allosteric effector GTP functions by stabilizing the protein conformation that binds the tetrahedral intermediate(s) formed during glutamine hydrolysis. Inhibited by the product CTP, via allosteric rather than competitive inhibition. Catalyzes the ATP-dependent amination of UTP to CTP with either L-glutamine or ammonia as the source of nitrogen. Regulates intracellular CTP levels through interactions with the four ribonucleotide triphosphates. The sequence is that of CTP synthase from Shewanella sp. (strain MR-4).